The primary structure comprises 788 residues: Integrin beta-6 (788 aa).

A signal peptide spans 1 to 21 (MGIELLCLFFLFLGRNDHVQG). Positions 22-71 (GCALGGAETCEDCLLIGPQCAWCSQENFTYLSGVGERCDTPANLLAKGCQ) constitute a PSI domain. Over 22–709 (GCALGGAETC…KDCPKPPNSP (688 aa)) the chain is Extracellular. Disulfide bonds link C23-C41, C31-C454, C34-C59, C44-C70, C197-C204, C252-C293, C394-C406, C426-C452, C456-C476, C467-C479, C481-C490, C492-C519, C502-C517, C511-C522, C524-C537, C539-C560, C544-C558, C552-C563, C565-C574, C576-C599, C583-C597, C591-C602, C604-C614, C617-C620, C624-C670, C630-C649, C633-C645, and C678-C702. 2 N-linked (GlcNAc...) asparagine glycosylation sites follow: N48 and N97. A VWFA domain is found at 131 to 371 (YPVDLYYLMD…QLIISAYEEL (241 aa)). Positions 140, 142, and 144 each coordinate Mg(2+). S144, D147, D148, and E179 together coordinate Ca(2+). Residues N235, D237, P239, and E240 each coordinate Ca(2+). E240 contacts Mg(2+). A glycan (N-linked (GlcNAc...) asparagine) is linked at N260. Ca(2+) is bound by residues D271 and K355. N387 is a glycosylation site (N-linked (GlcNAc...) asparagine). Residue N418 is glycosylated (N-linked (GlcNAc...) asparagine). 4 consecutive I-EGF domains span residues 456–491 (CQKEVEVNSSKCNHGNGSFQCGVCACNPGHMGPHCE), 492–538 (CGED…PYCQ), 539–575 (CDDFSCVRHKGLLCGDNGDCECGECVCRSGWTGEYCN), and 576–615 (CTTSTDQCVSEDGVLCSGRGDCVCGKCICTNPGASGLTCE). Residues N463 and N471 are each glycosylated (N-linked (GlcNAc...) asparagine). The helical transmembrane segment at 710-730 (MIMLGVSLAILLIGVVLLCIW) threads the bilayer. The segment at 731–758 (KLLVSFHDRKEVAKFEAERSKAKWQTGT) is interaction with HAX1. The Cytoplasmic segment spans residues 731 to 788 (KLLVSFHDRKEVAKFEAERSKAKWQTGTNPLYRGSTSTFKNVTYKHREKQKVDLSMDG).

It belongs to the integrin beta chain family. As to quaternary structure, heterodimer of an alpha and a beta subunit. Interacts with FLNB. Interacts with HAX1. ITGAV:ITGB6 interacts with FBN1. ITGAV:ITGB6 interacts with TGFB1.

The protein resides in the cell membrane. It is found in the cell junction. Its subcellular location is the focal adhesion. Its function is as follows. Integrin alpha-V:beta-6 (ITGAV:ITGB6) is a receptor for fibronectin and cytotactin. It recognizes the sequence R-G-D in its ligands. ITGAV:ITGB6 acts as a receptor for fibrillin-1 (FBN1) and mediates R-G-D-dependent cell adhesion to FBN1. Integrin alpha-V:beta-6 (ITGAV:ITGB6) mediates R-G-D-dependent release of transforming growth factor beta-1 (TGF-beta-1) from regulatory Latency-associated peptide (LAP), thereby playing a key role in TGF-beta-1 activation. This chain is Integrin beta-6 (ITGB6), found in Sus scrofa (Pig).